Here is a 186-residue protein sequence, read N- to C-terminus: Protein C (186 aa).

Polar residues predominate over residues 1-15; sequence MSKTDWNASGLSRPS. The disordered stretch occupies residues 1-44; that stretch reads MSKTDWNASGLSRPSPSAHWPSRKLWQHGQKYQTTQDRSEPPAG.

Belongs to the morbillivirus protein C family. In terms of assembly, interacts with the phosphoprotein (via C-terminus); this interaction allows C to associate with the ribonucleocapsid.

The protein localises to the host nucleus. It localises to the host cytoplasmic vesicle. In terms of biological role, ribonucleocapsid-associated protein that interacts with the phosphoprotein (P), thereby increasing replication accuracy and processivity of the polymerase complex. The polypeptide is Protein C (P/V/C) (Homo sapiens (Human)).